Here is a 260-residue protein sequence, read N- to C-terminus: Tetraspanin-14 (260 aa).

Residues 1-10 are Cytoplasmic-facing; the sequence is MKSQSHKPWN. A helical transmembrane segment spans residues 11–31; it reads LVAGIFFPIITFFLSAPLVGH. Over 32–54 the chain is Extracellular; it reads ALYLFCMRNDHVYYRDFQSTLPR. Residues 55–75 traverse the membrane as a helical segment; it reads VQTLVSVSLLALFLLSNIGMF. Residues 76–80 lie on the Cytoplasmic side of the membrane; it reads LRPRR. A helical transmembrane segment spans residues 81 to 101; the sequence is LSYFLVIVFFIGFAYSGVYKM. Over 102–260 the chain is Extracellular; it reads ESRRFSPTPM…FLSSLTSLFR (159 aa). An N-linked (GlcNAc...) asparagine glycan is attached at Asn-182.

This sequence belongs to the tetraspanin (TM4SF) family.

It localises to the membrane. Functionally, may be involved in the regulation of cell differentiation. The sequence is that of Tetraspanin-14 (TET14) from Arabidopsis thaliana (Mouse-ear cress).